We begin with the raw amino-acid sequence, 1235 residues long: Ubiquitin carboxyl-terminal hydrolase 40 (1235 aa).

One can recognise a USP domain in the interval 41–482; it reads SGIRNQGGTC…SAYMLFYRKS (442 aa). The active-site Nucleophile is Cys-50. Residue His-305 is the Proton acceptor of the active site. A compositionally biased stretch (basic and acidic residues) spans 1180–1190; that stretch reads IRDDTGKEKQK. The disordered stretch occupies residues 1180–1235; it reads IRDDTGKEKQKQRALGRRKSQEALHEQSSYILSSAETPARPRAPETSLSIHVGSFR. The span at 1205–1215 shows a compositional bias: polar residues; sequence EQSSYILSSAE.

Belongs to the peptidase C19 family. Broadly expressed.

It catalyses the reaction Thiol-dependent hydrolysis of ester, thioester, amide, peptide and isopeptide bonds formed by the C-terminal Gly of ubiquitin (a 76-residue protein attached to proteins as an intracellular targeting signal).. May be catalytically inactive. The protein is Ubiquitin carboxyl-terminal hydrolase 40 (USP40) of Homo sapiens (Human).